Consider the following 104-residue polypeptide: MIRKAFVMQVNPDAHEEYQRRHNPIWPELEAVLKSHGAHNYAIYLDKARNLLFAMVEIESEERWNAVASTDVCQRWWKYMTDVMPANPDNSPVSSELQEVFYLP.

Tyrosine 18 is a substrate binding site. Residue histidine 22 is the Proton donor of the active site. Substrate-binding positions include tyrosine 41 and 76–77; that span reads WW.

This sequence belongs to the rhamnose mutarotase family. In terms of assembly, homodimer.

It localises to the cytoplasm. It catalyses the reaction alpha-L-rhamnose = beta-L-rhamnose. The protein operates within carbohydrate metabolism; L-rhamnose metabolism. In terms of biological role, involved in the anomeric conversion of L-rhamnose. This is L-rhamnose mutarotase from Escherichia coli (strain K12 / MC4100 / BW2952).